A 695-amino-acid chain; its full sequence is Elongation factor G (695 aa).

A tr-type G domain is found at 9–283 (EKIRNIGIVA…AVIDYLPSPL (275 aa)). Residues 18–25 (AHIDAGKT), 82–86 (DTPGH), and 136–139 (NKMD) contribute to the GTP site.

This sequence belongs to the TRAFAC class translation factor GTPase superfamily. Classic translation factor GTPase family. EF-G/EF-2 subfamily.

The protein resides in the cytoplasm. Catalyzes the GTP-dependent ribosomal translocation step during translation elongation. During this step, the ribosome changes from the pre-translocational (PRE) to the post-translocational (POST) state as the newly formed A-site-bound peptidyl-tRNA and P-site-bound deacylated tRNA move to the P and E sites, respectively. Catalyzes the coordinated movement of the two tRNA molecules, the mRNA and conformational changes in the ribosome. The sequence is that of Elongation factor G from Petrotoga mobilis (strain DSM 10674 / SJ95).